The primary structure comprises 144 residues: L-fucose mutarotase (144 aa).

His-22 functions as the Proton donor in the catalytic mechanism. Substrate contacts are provided by residues Asp-30, Arg-109, and 131–133 (YGN).

The protein belongs to the RbsD / FucU family. FucU mutarotase subfamily. In terms of assembly, homodecamer.

It is found in the cytoplasm. It carries out the reaction alpha-L-fucose = beta-L-fucose. Its pathway is carbohydrate metabolism; L-fucose metabolism. Its function is as follows. Involved in the anomeric conversion of L-fucose. The protein is L-fucose mutarotase of Histophilus somni (strain 2336) (Haemophilus somnus).